We begin with the raw amino-acid sequence, 222 residues long: Large ribosomal subunit protein uL1 (222 aa).

It belongs to the universal ribosomal protein uL1 family. As to quaternary structure, part of the 50S ribosomal subunit.

In terms of biological role, binds directly to 23S rRNA. Probably involved in E site tRNA release. Its function is as follows. Protein L1 is also a translational repressor protein, it controls the translation of its operon by binding to its mRNA. This Pyrobaculum arsenaticum (strain DSM 13514 / JCM 11321 / PZ6) protein is Large ribosomal subunit protein uL1.